The primary structure comprises 74 residues: Brevinin-2CG1 (74 aa).

Residues 1–22 form the signal peptide; the sequence is MFTMKKSMLVLFFLGTISLSLC. A propeptide spans 23–39 (removed in mature form); the sequence is EEERNADEDDGEMTEEV. Cys68 and Cys74 are joined by a disulfide.

Expressed by the skin glands.

It localises to the secreted. Functionally, antimicrobial peptide active against a variety of Gram-positive and some Gram-negative bacterial strains. Has antifungal activity against a slime mold isolate. Has hemolytic activity against human erythrocytes. The protein is Brevinin-2CG1 of Amolops chunganensis (Chungan torrent frog).